Reading from the N-terminus, the 274-residue chain is Protein-export membrane protein SecF (274 aa).

6 helical membrane passes run 14–34 (LLIL…ALGV), 121–141 (SVKV…FAIF), 143–163 (KPLL…DALG), 175–197 (ASFA…LSMY), 217–237 (TGIT…LLSM), and 247–267 (VVIF…AWVI).

The protein belongs to the SecD/SecF family. SecF subfamily. As to quaternary structure, part of the protein translocation apparatus. Forms a complex with SecD.

It is found in the cell membrane. Its function is as follows. Involved in protein export. This chain is Protein-export membrane protein SecF, found in Methanopyrus kandleri (strain AV19 / DSM 6324 / JCM 9639 / NBRC 100938).